The chain runs to 347 residues: Phosphoribosylformylglycinamidine cyclo-ligase (347 aa).

It belongs to the AIR synthase family.

It is found in the cytoplasm. The enzyme catalyses 2-formamido-N(1)-(5-O-phospho-beta-D-ribosyl)acetamidine + ATP = 5-amino-1-(5-phospho-beta-D-ribosyl)imidazole + ADP + phosphate + H(+). It functions in the pathway purine metabolism; IMP biosynthesis via de novo pathway; 5-amino-1-(5-phospho-D-ribosyl)imidazole from N(2)-formyl-N(1)-(5-phospho-D-ribosyl)glycinamide: step 2/2. The protein is Phosphoribosylformylglycinamidine cyclo-ligase of Yersinia pseudotuberculosis serotype IB (strain PB1/+).